The following is a 298-amino-acid chain: Small ribosomal subunit biogenesis GTPase RsgA (298 aa).

Residues 67-228 form the CP-type G domain; it reads TNELIRPPIC…VADTPGFSSL (162 aa). A GTP-binding site is contributed by 116 to 119; sequence TKMD. Thr-166 carries the phosphothreonine modification. 171-179 lines the GTP pocket; the sequence is GQSGVGKSS. Zn(2+) contacts are provided by Cys-252, Cys-257, His-259, and Cys-265.

The protein belongs to the TRAFAC class YlqF/YawG GTPase family. RsgA subfamily. As to quaternary structure, monomer, but able to form dimers. Associates with 30S ribosomal subunit; a phospho-mimetic mutation increases association. Probably binds 16S rRNA. It depends on Zn(2+) as a cofactor. In vitro phosphorylated mostly on Thr (with lower signal on Ser) by PrkC in the presence of poly-L-Lys or myelin basic protein, dephosphorylated by PrpC. Most in vitro phosphorylation occurs on Thr-166, in vivo phosphorylation has not been detected, but it might vary during the cell cycle.

The protein localises to the cytoplasm. Its function is as follows. One of several proteins that assist in the late maturation steps of the functional core of the 30S ribosomal subunit. Helps release RbfA from mature subunits. May play a role in the assembly of ribosomal proteins into the subunit. Circularly permuted GTPase with a low level of activity and slow catalytic turnover, does not act on ATP. GTPase activity is stimulated by the presence of 30S or 70S ribosomes, phosphorylation increases stimulation. Depletion results in increased sensitivity to protein synthesis inhibitors that block the peptide channel or peptidyl transferase center on the ribosome, suggesting this protein functions in conjunction with the ribosome in vivo. Decreasing levels of protein lead to an increase in free 30S and 50S ribosomal subunits and a decrease in assembled 70S ribosomes. Suggested to serve as a specific transcription factor for proteins involved in late stages of peptidoglycan synthesis. The protein is Small ribosomal subunit biogenesis GTPase RsgA of Bacillus subtilis (strain 168).